Reading from the N-terminus, the 233-residue chain is Large ribosomal subunit protein uL1 (233 aa).

The protein belongs to the universal ribosomal protein uL1 family. In terms of assembly, part of the 50S ribosomal subunit.

Its function is as follows. Binds directly to 23S rRNA. The L1 stalk is quite mobile in the ribosome, and is involved in E site tRNA release. Functionally, protein L1 is also a translational repressor protein, it controls the translation of the L11 operon by binding to its mRNA. The sequence is that of Large ribosomal subunit protein uL1 from Nautilia profundicola (strain ATCC BAA-1463 / DSM 18972 / AmH).